Reading from the N-terminus, the 502-residue chain is Cytochrome P450 71B17 (502 aa).

A helical membrane pass occupies residues 1–21 (MAISLLCLFLITFVSLTIVGC). Residue Cys-444 participates in heme binding.

It belongs to the cytochrome P450 family. It depends on heme as a cofactor.

The protein localises to the membrane. In Arabidopsis thaliana (Mouse-ear cress), this protein is Cytochrome P450 71B17 (CYP71B17).